The chain runs to 771 residues: Endoplasmin homolog (771 aa).

Residues 1 to 24 (MANSSLLRVVLVALLLLGSVTVSA) form the signal peptide. 3 residues coordinate ATP: asparagine 63, aspartate 109, and phenylalanine 160. N-linked (GlcNAc...) asparagine glycosylation is present at asparagine 63. The interval 254–282 (AATPESAAEERSLDEGAVEEDPDKEGDTQ) is disordered. N-linked (GlcNAc...) asparagine glycans are attached at residues asparagine 306 and asparagine 402. The segment at 727-771 (ADDSLLPPDDAEYTVSDTETEEEEEQPKVDTNAHEEAETDGEGDL) is disordered. Basic and acidic residues predominate over residues 752–762 (QPKVDTNAHEE). Residues 768 to 771 (EGDL) carry the Prevents secretion from ER motif.

It belongs to the heat shock protein 90 family. In terms of assembly, homotetramer.

It is found in the endoplasmic reticulum. Its function is as follows. Molecular chaperone that functions in the processing and transport of secreted proteins. Required for the synthesis of lipophosphoglycan (LPG), a cell surface glycoconjugate. Necessary for the attachment of the galactosyl residue to the mannose within the phosphoglycan repeats of the nascent LPG chain. Also required for addition of phosphoglycan to acid phosphatase. Not required for normal growth. Has ATPase activity. Binds heparin with micromolar affinity which may facilitate infection of host cells. This is Endoplasmin homolog from Leishmania donovani.